The sequence spans 282 residues: Elongation factor Ts (282 aa).

Residues 79–82 (TDFV) are involved in Mg(2+) ion dislocation from EF-Tu.

This sequence belongs to the EF-Ts family.

The protein resides in the cytoplasm. Functionally, associates with the EF-Tu.GDP complex and induces the exchange of GDP to GTP. It remains bound to the aminoacyl-tRNA.EF-Tu.GTP complex up to the GTP hydrolysis stage on the ribosome. The polypeptide is Elongation factor Ts (Shewanella loihica (strain ATCC BAA-1088 / PV-4)).